Reading from the N-terminus, the 293-residue chain is ATP synthase gamma chain (293 aa).

It belongs to the ATPase gamma chain family. F-type ATPases have 2 components, CF(1) - the catalytic core - and CF(0) - the membrane proton channel. CF(1) has five subunits: alpha(3), beta(3), gamma(1), delta(1), epsilon(1). CF(0) has three main subunits: a, b and c.

Its subcellular location is the cell inner membrane. Functionally, produces ATP from ADP in the presence of a proton gradient across the membrane. The gamma chain is believed to be important in regulating ATPase activity and the flow of protons through the CF(0) complex. The sequence is that of ATP synthase gamma chain from Psychrobacter sp. (strain PRwf-1).